Here is a 318-residue protein sequence, read N- to C-terminus: 2,4-dinitroanisole O-demethylase subunit beta (318 aa).

The protein belongs to the metallo-beta-lactamase superfamily. As to quaternary structure, part of the complex DnhAB composed of the 2,4-dinitroanisole O-demethylase alpha (DnhA) and beta (DnhB) subunits.

It catalyses the reaction 2,4-dinitroanisole + H2O = 2,4-dinitrophenol + methanol + H(+). Its function is as follows. Involved in the degradation of 2,4-dinitroanisole (DNAN), an insensitive munition ingredient used in explosive formulations as a replacement for 2,4,6-trinitrotoluene (TNT). Catalyzes the removal of the methyl group from 2,4-dinitroanisole (DNAN) to yield 2,4-dinitrophenol (2,4-DNP) and methanol. The chain is 2,4-dinitroanisole O-demethylase subunit beta from Nocardioides sp. (strain JS1661).